Here is a 179-residue protein sequence, read N- to C-terminus: Acireductone dioxygenase (179 aa).

Residues His-97, His-99, Glu-103, and His-141 each contribute to the Fe(2+) site. Ni(2+) contacts are provided by His-97, His-99, Glu-103, and His-141.

It belongs to the acireductone dioxygenase (ARD) family. Monomer. It depends on Fe(2+) as a cofactor. The cofactor is Ni(2+).

It carries out the reaction 1,2-dihydroxy-5-(methylsulfanyl)pent-1-en-3-one + O2 = 3-(methylsulfanyl)propanoate + CO + formate + 2 H(+). The catalysed reaction is 1,2-dihydroxy-5-(methylsulfanyl)pent-1-en-3-one + O2 = 4-methylsulfanyl-2-oxobutanoate + formate + 2 H(+). The protein operates within amino-acid biosynthesis; L-methionine biosynthesis via salvage pathway; L-methionine from S-methyl-5-thio-alpha-D-ribose 1-phosphate: step 5/6. Catalyzes 2 different reactions between oxygen and the acireductone 1,2-dihydroxy-3-keto-5-methylthiopentene (DHK-MTPene) depending upon the metal bound in the active site. Fe-containing acireductone dioxygenase (Fe-ARD) produces formate and 2-keto-4-methylthiobutyrate (KMTB), the alpha-ketoacid precursor of methionine in the methionine recycle pathway. Ni-containing acireductone dioxygenase (Ni-ARD) produces methylthiopropionate, carbon monoxide and formate, and does not lie on the methionine recycle pathway. The polypeptide is Acireductone dioxygenase (Gluconacetobacter diazotrophicus (strain ATCC 49037 / DSM 5601 / CCUG 37298 / CIP 103539 / LMG 7603 / PAl5)).